A 250-amino-acid chain; its full sequence is tRNA:m(4)X modification enzyme TRM13 (250 aa).

Residues 1–10 show a composition bias toward basic residues; that stretch reads MGRAPAKRKP. The interval 1–20 is disordered; that stretch reads MGRAPAKRKPSSPPPPPPPG. The span at 11–20 shows a compositional bias: pro residues; sequence SSPPPPPPPG. Residues 62 to 89 form a CHHC U11-48K-type zinc finger; it reads LVPCPVDPSHTVLEENLEAHVGKCPLKK. Zn(2+) contacts are provided by Cys-65, His-71, His-81, and Cys-85.

This sequence belongs to the methyltransferase TRM13 family.

It is found in the nucleus. It localises to the cytoplasm. The catalysed reaction is cytidine(4) in tRNA(Pro) + S-adenosyl-L-methionine = 2'-O-methylcytidine(4) in tRNA(Pro) + S-adenosyl-L-homocysteine + H(+). The enzyme catalyses cytidine(4) in tRNA(Gly)(GCC) + S-adenosyl-L-methionine = 2'-O-methylcytidine(4) in tRNA(Gly)(GCC) + S-adenosyl-L-homocysteine + H(+). It catalyses the reaction adenosine(4) in tRNA(His) + S-adenosyl-L-methionine = 2'-O-methyladenosine(4) in tRNA(His) + S-adenosyl-L-homocysteine + H(+). Functionally, tRNA methylase that catalyzes 2'-O-methyladenosine (Am) nucleoside formation on tRNA(Gly)(GCC) in vitro. May 2'-O-methylate cytidine(4) in tRNA(Pro) and tRNA(Gly)(GCC), and adenosine(4) in tRNA(His). Involved in salt stress tolerance. The polypeptide is tRNA:m(4)X modification enzyme TRM13 (Oryza sativa subsp. japonica (Rice)).